We begin with the raw amino-acid sequence, 323 residues long: Olfactory receptor 1E2 (323 aa).

At 1–25 the chain is on the extracellular side; it reads MMGQNQTSISDFLLLGLPIQPEQQN. N-linked (GlcNAc...) asparagine glycosylation occurs at N5. Residues 26–49 traverse the membrane as a helical segment; the sequence is LCYALFLAMYLTTLLGNLLIIVLI. Residues 50-57 are Cytoplasmic-facing; it reads RLDSHLHT. A helical membrane pass occupies residues 58-79; sequence PVYLFLSNLSFSDLCFSSVTMP. The Extracellular portion of the chain corresponds to 80-100; sequence KLLQNMQNQDPSIPYADCLTQ. Cysteines 97 and 198 form a disulfide. The helical transmembrane segment at 101–120 threads the bilayer; that stretch reads MYFFLYFSDLESFLLVAMAY. Residues 121–148 lie on the Cytoplasmic side of the membrane; it reads DRYVAICFPMHYTAICFLLHYTAIMSPM. The helical transmembrane segment at 149–167 threads the bilayer; it reads LCLSVVALSWVLTTFHAML. Residues 168–205 are Extracellular-facing; that stretch reads HTLLMARLCFCADNVIPHFFCDMSALLKLACSDTRVNE. A helical transmembrane segment spans residues 206–228; it reads WVIFIMGGLILVIPFLLILGSYA. Residues 229–245 lie on the Cytoplasmic side of the membrane; the sequence is RIVSSILKVPSSKGICK. The helical transmembrane segment at 246 to 269 threads the bilayer; sequence AFSTCGSHLSVVSLFYGTVIGLYL. Residues 270 to 281 are Extracellular-facing; that stretch reads CPSANSSTLKDT. N274 carries N-linked (GlcNAc...) asparagine glycosylation. A helical membrane pass occupies residues 282–301; that stretch reads VMAMMYTVVTPMLTPFIYSL. The Cytoplasmic segment spans residues 302–323; it reads RNRDMKGALERVICKRKNPFLL.

The protein belongs to the G-protein coupled receptor 1 family.

The protein localises to the cell membrane. Odorant receptor. In Homo sapiens (Human), this protein is Olfactory receptor 1E2 (OR1E2).